We begin with the raw amino-acid sequence, 338 residues long: Anthranilate phosphoribosyltransferase (338 aa).

Residues glycine 82, 85-86, threonine 90, 92-95, 110-118, and serine 122 each bind 5-phospho-alpha-D-ribose 1-diphosphate; these read GD, NIST, and KHGNRAASS. Position 82 (glycine 82) interacts with anthranilate. Serine 94 lines the Mg(2+) pocket. Asparagine 113 lines the anthranilate pocket. Anthranilate is bound at residue arginine 168. Mg(2+)-binding residues include aspartate 226 and glutamate 227.

Belongs to the anthranilate phosphoribosyltransferase family. As to quaternary structure, homodimer. Mg(2+) serves as cofactor.

The enzyme catalyses N-(5-phospho-beta-D-ribosyl)anthranilate + diphosphate = 5-phospho-alpha-D-ribose 1-diphosphate + anthranilate. The protein operates within amino-acid biosynthesis; L-tryptophan biosynthesis; L-tryptophan from chorismate: step 2/5. Functionally, catalyzes the transfer of the phosphoribosyl group of 5-phosphorylribose-1-pyrophosphate (PRPP) to anthranilate to yield N-(5'-phosphoribosyl)-anthranilate (PRA). The chain is Anthranilate phosphoribosyltransferase from Deinococcus radiodurans (strain ATCC 13939 / DSM 20539 / JCM 16871 / CCUG 27074 / LMG 4051 / NBRC 15346 / NCIMB 9279 / VKM B-1422 / R1).